The following is a 366-amino-acid chain: Quinolinate synthase (366 aa).

H44 and S61 together coordinate iminosuccinate. C108 is a binding site for [4Fe-4S] cluster. Iminosuccinate-binding positions include Y139–N141 and S160. C228 contacts [4Fe-4S] cluster. Iminosuccinate contacts are provided by residues H254–E256 and T271. C318 lines the [4Fe-4S] cluster pocket.

This sequence belongs to the quinolinate synthase family. Type 3 subfamily. Requires [4Fe-4S] cluster as cofactor.

The protein localises to the cytoplasm. It catalyses the reaction iminosuccinate + dihydroxyacetone phosphate = quinolinate + phosphate + 2 H2O + H(+). The protein operates within cofactor biosynthesis; NAD(+) biosynthesis; quinolinate from iminoaspartate: step 1/1. Its function is as follows. Catalyzes the condensation of iminoaspartate with dihydroxyacetone phosphate to form quinolinate. The chain is Quinolinate synthase from Listeria monocytogenes serotype 4b (strain F2365).